We begin with the raw amino-acid sequence, 104 residues long: Large ribosomal subunit protein uL24 (104 aa).

Belongs to the universal ribosomal protein uL24 family. Part of the 50S ribosomal subunit.

Functionally, one of two assembly initiator proteins, it binds directly to the 5'-end of the 23S rRNA, where it nucleates assembly of the 50S subunit. Its function is as follows. One of the proteins that surrounds the polypeptide exit tunnel on the outside of the subunit. The protein is Large ribosomal subunit protein uL24 of Pseudomonas aeruginosa (strain LESB58).